The sequence spans 486 residues: Malonate-semialdehyde dehydrogenase (486 aa).

The NAD(+) site is built by F154, K178, E181, R182, and S231. C286 functions as the Nucleophile in the catalytic mechanism. Position 386 (E386) interacts with NAD(+).

The protein belongs to the aldehyde dehydrogenase family. IolA subfamily. In terms of assembly, homotetramer.

It catalyses the reaction 3-oxopropanoate + NAD(+) + CoA + H2O = hydrogencarbonate + acetyl-CoA + NADH + H(+). The enzyme catalyses 2-methyl-3-oxopropanoate + NAD(+) + CoA + H2O = propanoyl-CoA + hydrogencarbonate + NADH + H(+). It participates in polyol metabolism; myo-inositol degradation into acetyl-CoA; acetyl-CoA from myo-inositol: step 7/7. In terms of biological role, catalyzes the oxidation of malonate semialdehyde (MSA) and methylmalonate semialdehyde (MMSA) into acetyl-CoA and propanoyl-CoA, respectively. Is involved in a myo-inositol catabolic pathway. Bicarbonate, and not CO2, is the end-product of the enzymatic reaction. The polypeptide is Malonate-semialdehyde dehydrogenase (Bacillus cereus (strain B4264)).